Reading from the N-terminus, the 536-residue chain is Lariat debranching enzyme (536 aa).

Cys-8, His-10, Asp-39, and Asn-84 together coordinate a divalent metal cation. The tract at residues 124–154 is lariat recognition loop; it reads SGIFKSHDYRKGHFECPPYNQQTIRSAYHVR. Residues His-174, His-226, and His-228 each contribute to the a divalent metal cation site. The segment at 388–536 is disordered; the sequence is EEGSVRGEYE…YAAEDEDEAK (149 aa). A compositionally biased stretch (polar residues) spans 414–426; it reads EYNTDNSGLSSIN. Acidic residues predominate over residues 430–441; that stretch reads IMLDDEGGDEDL. Over residues 484–504 the composition is skewed to basic and acidic residues; sequence ELEKSGVNKQVEEKSLNERPL.

This sequence belongs to the lariat debranching enzyme family. Fe(2+) is required as a cofactor. Requires Zn(2+) as cofactor. Mn(2+) serves as cofactor.

The protein localises to the nucleus. With respect to regulation, active in presence of diverse metals including Fe(2+), Zn(2+), Mn(2+). Also activated by Ca(2+). Binds two metal cations in two adjacent alpha and beta metal-binding pockets. Functionally, cleaves the 2'-5' phosphodiester linkage at the branch point of excised lariat intron RNA and converts them into linear molecules that can be subsequently degraded, thereby facilitating ribonucleotide turnover. Linked to its role in pre-mRNA processing mechanism, may also participate in retrovirus replication and have an antiviral cell-intrinsic defense function. The chain is Lariat debranching enzyme (DBR1) from Gallus gallus (Chicken).